A 288-amino-acid polypeptide reads, in one-letter code: MSGLRALLGLGLLVAGSRLSRVRVQAGSCRAGATWWVPQRLISGGRGDSEVMASSAVKYLSQEEAQAVDQELFNEYQFSVDQLMELAGLSCATAIAKAYPPTSLSRSPPTVLVICGPGNNGGDGLVCARHLKLFGYQPTIYYPKRPNKPLFTALVTQCQKMDIPFLGEMPPEPMLIDELYELVVDAIFGFSFTGEVREPFRSILSVLNGLTVPIASIDIPSGWDVEKGSSGGIQPDLLISLTAPKKSATQFTGRYHYLGGRFVPPALEKKYQLNLPPYPDTECVYRLQ.

A mitochondrion-targeting transit peptide spans 1–32 (MSGLRALLGLGLLVAGSRLSRVRVQAGSCRAG). Ser-49 bears the Phosphoserine mark. The YjeF N-terminal domain maps to 65 to 275 (AQAVDQELFN…ALEKKYQLNL (211 aa)). 119–123 (NNGGD) serves as a coordination point for (6S)-NADPHX. A K(+)-binding site is contributed by Asn-120. Position 144 is an N6-succinyllysine (Lys-144). Asp-185 contacts K(+). Residues 189–195 (GFSFTGE) and Asp-218 contribute to the (6S)-NADPHX site. Residue Ser-221 participates in K(+) binding.

This sequence belongs to the NnrE/AIBP family. In terms of assembly, homodimer. Interacts with APOA1 and APOA2. K(+) is required as a cofactor. Undergoes physiological phosphorylation during sperm capacitation, downstream to PKA activation.

It is found in the mitochondrion. Its subcellular location is the secreted. The catalysed reaction is (6R)-NADHX = (6S)-NADHX. It catalyses the reaction (6R)-NADPHX = (6S)-NADPHX. Catalyzes the epimerization of the S- and R-forms of NAD(P)HX, a damaged form of NAD(P)H that is a result of enzymatic or heat-dependent hydration. This is a prerequisite for the S-specific NAD(P)H-hydrate dehydratase to allow the repair of both epimers of NAD(P)HX. Accelerates cholesterol efflux from endothelial cells to high-density lipoprotein (HDL) and thereby regulates angiogenesis. The chain is NAD(P)H-hydrate epimerase from Bos taurus (Bovine).